Reading from the N-terminus, the 475-residue chain is Ribulose bisphosphate carboxylase large chain (475 aa).

Positions 1–2 (MS) are excised as a propeptide. Proline 3 carries the N-acetylproline modification. At lysine 14 the chain carries N6,N6,N6-trimethyllysine. Substrate is bound by residues asparagine 123 and threonine 173. The active-site Proton acceptor is the lysine 175. Residue lysine 177 participates in substrate binding. Residues lysine 201, aspartate 203, and glutamate 204 each coordinate Mg(2+). At lysine 201 the chain carries N6-carboxylysine. The active-site Proton acceptor is histidine 294. Residues arginine 295, histidine 327, and serine 379 each contribute to the substrate site.

It belongs to the RuBisCO large chain family. Type I subfamily. As to quaternary structure, heterohexadecamer of 8 large chains and 8 small chains; disulfide-linked. The disulfide link is formed within the large subunit homodimers. Mg(2+) is required as a cofactor. In terms of processing, the disulfide bond which can form in the large chain dimeric partners within the hexadecamer appears to be associated with oxidative stress and protein turnover.

It is found in the plastid. Its subcellular location is the chloroplast. The enzyme catalyses 2 (2R)-3-phosphoglycerate + 2 H(+) = D-ribulose 1,5-bisphosphate + CO2 + H2O. It catalyses the reaction D-ribulose 1,5-bisphosphate + O2 = 2-phosphoglycolate + (2R)-3-phosphoglycerate + 2 H(+). In terms of biological role, ruBisCO catalyzes two reactions: the carboxylation of D-ribulose 1,5-bisphosphate, the primary event in carbon dioxide fixation, as well as the oxidative fragmentation of the pentose substrate in the photorespiration process. Both reactions occur simultaneously and in competition at the same active site. The polypeptide is Ribulose bisphosphate carboxylase large chain (Physcomitrium patens (Spreading-leaved earth moss)).